The following is a 254-amino-acid chain: Alcohol dehydrogenase (254 aa).

Residue 10–33 participates in NAD(+) binding; it reads FVAGLGGIGLDTSREIVKSGPKNL. Ser-138 contributes to the substrate binding site. Tyr-151 acts as the Proton acceptor in catalysis.

Belongs to the short-chain dehydrogenases/reductases (SDR) family. In terms of assembly, homodimer.

The enzyme catalyses a primary alcohol + NAD(+) = an aldehyde + NADH + H(+). It carries out the reaction a secondary alcohol + NAD(+) = a ketone + NADH + H(+). In Drosophila hawaiiensis (Fruit fly), this protein is Alcohol dehydrogenase (Adh).